Consider the following 510-residue polypeptide: Lysine--tRNA ligase (510 aa).

Mg(2+) is bound by residues Glu420 and Glu427.

This sequence belongs to the class-II aminoacyl-tRNA synthetase family. In terms of assembly, homodimer. Requires Mg(2+) as cofactor.

It localises to the cytoplasm. It catalyses the reaction tRNA(Lys) + L-lysine + ATP = L-lysyl-tRNA(Lys) + AMP + diphosphate. The protein is Lysine--tRNA ligase of Vibrio vulnificus (strain CMCP6).